A 128-amino-acid chain; its full sequence is Small ribosomal subunit protein uS11 (128 aa).

This sequence belongs to the universal ribosomal protein uS11 family. In terms of assembly, part of the 30S ribosomal subunit. Interacts with proteins S7 and S18. Binds to IF-3.

Located on the platform of the 30S subunit, it bridges several disparate RNA helices of the 16S rRNA. Forms part of the Shine-Dalgarno cleft in the 70S ribosome. This chain is Small ribosomal subunit protein uS11, found in Desulforudis audaxviator (strain MP104C).